The following is a 122-amino-acid chain: Large ribosomal subunit protein uL14c (122 aa).

Belongs to the universal ribosomal protein uL14 family. Part of the 50S ribosomal subunit.

The protein resides in the plastid. It is found in the chloroplast. Binds to 23S rRNA. This Anthoceros angustus (Hornwort) protein is Large ribosomal subunit protein uL14c.